The following is a 132-amino-acid chain: Small ribosomal subunit protein bS6 (132 aa).

Residues 96 to 132 (HAEGPSIQMQKRDERERGDRGDRPDRGDRGERGGFRR) form a disordered region. Residues 105–132 (QKRDERERGDRGDRPDRGDRGERGGFRR) show a composition bias toward basic and acidic residues.

Belongs to the bacterial ribosomal protein bS6 family.

In terms of biological role, binds together with bS18 to 16S ribosomal RNA. The protein is Small ribosomal subunit protein bS6 of Cereibacter sphaeroides (strain ATCC 17025 / ATH 2.4.3) (Rhodobacter sphaeroides).